A 435-amino-acid polypeptide reads, in one-letter code: Plant UBX domain-containing protein 6 (435 aa).

3 disordered regions span residues 1–150, 208–265, and 311–352; these read MDVN…PQKV, ENYT…EDQP, and PTTT…SMSS. Low complexity predominate over residues 49–62; sequence TSSFSTFDGSSGYS. The segment covering 112 to 129 has biased composition (basic and acidic residues); the sequence is AVEHYGGEENRAIERPEQ. The segment covering 130–141 has biased composition (low complexity); the sequence is SSRSMSEETVSS. Residues 150 to 211 form the SEP 1 domain; it reads VFTHTVTSWS…IISREEENYT (62 aa). Positions 211–222 are enriched in polar residues; the sequence is TESQAGSDSAST. Over residues 231–242 the composition is skewed to basic and acidic residues; sequence RAKESAIERSEQ. The segment covering 252 to 265 has biased composition (acidic residues); that stretch reads DSAELQEQQQEDQP. The 76-residue stretch at 268-343 folds into the SEP 2 domain; the sequence is VVTYTVTIWR…ESTSTEPPLT (76 aa). Composition is skewed to low complexity over residues 312–323 and 333–349; these read TTTRSTSCSSQT and SEST…QPPS. One can recognise a UBX domain in the interval 357–434; the sequence is PAAPTTSIQL…GIANSVLVQK (78 aa).

The sequence is that of Plant UBX domain-containing protein 6 from Arabidopsis thaliana (Mouse-ear cress).